Consider the following 234-residue polypeptide: Putative methyltransferase-like protein 15P1 (234 aa).

Residues 100-102, D119, F146, D169, and Q176 contribute to the S-adenosyl-L-methionine site; that span reads GGH.

Belongs to the methyltransferase superfamily. RsmH family.

In terms of biological role, probable S-adenosyl-L-methionine-dependent methyltransferase. The polypeptide is Putative methyltransferase-like protein 15P1 (METTL15P1) (Homo sapiens (Human)).